Here is a 395-residue protein sequence, read N- to C-terminus: Putative gustatory receptor 58a (395 aa).

The Cytoplasmic portion of the chain corresponds to 1–32 (MLLKFMYIYGIGCGLMPAPLKKGQFLLGYKQR). The helical transmembrane segment at 33-53 (WYLIYTACLHGGLLTVLPFTF) threads the bilayer. Over 54-72 (PHYMYDDSYMSSNPVLKWT) the chain is Extracellular. The chain crosses the membrane as a helical span at residues 73–93 (FNLTNITRIMAMFSGVLLMWF). Residues 94–131 (RRKRILNLGENLILHCLKCKTLDNRSKKYSKLRKRVRN) lie on the Cytoplasmic side of the membrane. The chain crosses the membrane as a helical span at residues 132–152 (VLFQMLLVANLSILLGALILF). At 153 to 169 (RIHSVQRISKTAMIVAH) the chain is on the extracellular side. The chain crosses the membrane as a helical span at residues 170 to 190 (ITQFIYVVFMMTGICVILLVL). The Cytoplasmic portion of the chain corresponds to 191–250 (HWQSERLQIALKDLCSFLNHEERNSLTLSENKANRSLGKLAKLFKLFAENQRLVREVFRT). Residues 251-271 (FDLPIALLLLKMFVTNVNLVY) form a helical membrane-spanning segment. The Extracellular segment spans residues 272–288 (HGVQFGNDTIETSSYTR). A glycan (N-linked (GlcNAc...) asparagine) is linked at Asn-278. A helical transmembrane segment spans residues 289 to 309 (IVGQWVVISHYWSAVLLMNVV). Residues 310 to 366 (DDVTRRSDLKMGDLLREFSHLELVKRDFHLQLELFSDHLRCHPSTYKVCGLFIFNKQ) are Cytoplasmic-facing. The chain crosses the membrane as a helical span at residues 367 to 387 (TSLAYFFYVLVQVLVLVQFDL). The Extracellular portion of the chain corresponds to 388–395 (KNKVEKRN).

It belongs to the insect chemoreceptor superfamily. Gustatory receptor (GR) family. Gr22e subfamily. As to expression, expressed in the adult labellar chemosensory neurons.

It localises to the cell membrane. Functionally, probable gustatory receptor which mediates acceptance or avoidance behavior, depending on its substrates. In Drosophila melanogaster (Fruit fly), this protein is Putative gustatory receptor 58a (Gr58a).